The primary structure comprises 1152 residues: DNA-directed RNA polymerase subunit beta (1152 aa).

Belongs to the RNA polymerase beta chain family. In terms of assembly, the RNAP catalytic core consists of 2 alpha, 1 beta, 1 beta' and 1 omega subunit. When a sigma factor is associated with the core the holoenzyme is formed, which can initiate transcription.

The catalysed reaction is RNA(n) + a ribonucleoside 5'-triphosphate = RNA(n+1) + diphosphate. In terms of biological role, DNA-dependent RNA polymerase catalyzes the transcription of DNA into RNA using the four ribonucleoside triphosphates as substrates. This is DNA-directed RNA polymerase subunit beta from Deinococcus geothermalis (strain DSM 11300 / CIP 105573 / AG-3a).